The primary structure comprises 706 residues: Ribosomal RNA large subunit methyltransferase K/L (706 aa).

A THUMP domain is found at 43–154; that stretch reads LMYQSLLWSR…RDMASVALDL (112 aa).

It belongs to the methyltransferase superfamily. RlmKL family.

It is found in the cytoplasm. It catalyses the reaction guanosine(2445) in 23S rRNA + S-adenosyl-L-methionine = N(2)-methylguanosine(2445) in 23S rRNA + S-adenosyl-L-homocysteine + H(+). The catalysed reaction is guanosine(2069) in 23S rRNA + S-adenosyl-L-methionine = N(2)-methylguanosine(2069) in 23S rRNA + S-adenosyl-L-homocysteine + H(+). In terms of biological role, specifically methylates the guanine in position 2445 (m2G2445) and the guanine in position 2069 (m7G2069) of 23S rRNA. The chain is Ribosomal RNA large subunit methyltransferase K/L from Yersinia pseudotuberculosis serotype IB (strain PB1/+).